Reading from the N-terminus, the 359-residue chain is Peptide chain release factor 1 (359 aa).

Gln235 carries the N5-methylglutamine modification. Positions Ala280–Ile306 are disordered.

The protein belongs to the prokaryotic/mitochondrial release factor family. Post-translationally, methylated by PrmC. Methylation increases the termination efficiency of RF1.

Its subcellular location is the cytoplasm. Functionally, peptide chain release factor 1 directs the termination of translation in response to the peptide chain termination codons UAG and UAA. The polypeptide is Peptide chain release factor 1 (Rhizobium leguminosarum bv. trifolii (strain WSM2304)).